The chain runs to 267 residues: Ubiquinone biosynthesis protein COQ4 homolog, mitochondrial (267 aa).

Zn(2+) contacts are provided by His-170, Asp-171, His-174, and Glu-186.

This sequence belongs to the COQ4 family. In terms of assembly, component of a multi-subunit COQ enzyme complex. The cofactor is Zn(2+).

It localises to the mitochondrion inner membrane. The catalysed reaction is a 4-hydroxy-3-methoxy-5-(all-trans-polyprenyl)benzoate + H(+) = a 2-methoxy-6-(all-trans-polyprenyl)phenol + CO2. It participates in cofactor biosynthesis; ubiquinone biosynthesis. Its function is as follows. Lyase that catalyzes the C1-decarboxylation of 4-hydroxy-3-methoxy-5-(all-trans-polyprenyl)benzoic acid into 2-methoxy-6-(all-trans-polyprenyl)phenol during ubiquinone biosynthesis. In Drosophila pseudoobscura pseudoobscura (Fruit fly), this protein is Ubiquinone biosynthesis protein COQ4 homolog, mitochondrial.